Here is a 120-residue protein sequence, read N- to C-terminus: Large ribosomal subunit protein uL18 (120 aa).

This sequence belongs to the universal ribosomal protein uL18 family. As to quaternary structure, part of the 50S ribosomal subunit; part of the 5S rRNA/L5/L18/L25 subcomplex. Contacts the 5S and 23S rRNAs.

This is one of the proteins that bind and probably mediate the attachment of the 5S RNA into the large ribosomal subunit, where it forms part of the central protuberance. The sequence is that of Large ribosomal subunit protein uL18 from Janthinobacterium sp. (strain Marseille) (Minibacterium massiliensis).